A 25-amino-acid polypeptide reads, in one-letter code: Brevinin-2R (25 aa).

A disulfide bridge connects residues Cys-19 and Cys-25.

It belongs to the frog skin active peptide (FSAP) family. Brevinin subfamily. Expressed by the skin glands.

It is found in the secreted. Cytotoxic to cancer cells, acts via the activation of the lysosomal-mitochondrial death pathway and autophagy-like cell death. Does not show significant hemolytic activity. The protein is Brevinin-2R of Pelophylax ridibundus (Marsh frog).